Reading from the N-terminus, the 481-residue chain is Cysteine--tRNA ligase (481 aa).

C29 is a binding site for Zn(2+). The 'HIGH' region signature appears at V31 to H41. Residues C209, H234, and E238 each contribute to the Zn(2+) site. The 'KMSKS' region motif lies at K266–S270. K269 serves as a coordination point for ATP.

Belongs to the class-I aminoacyl-tRNA synthetase family. Monomer. Zn(2+) is required as a cofactor.

The protein resides in the cytoplasm. It catalyses the reaction tRNA(Cys) + L-cysteine + ATP = L-cysteinyl-tRNA(Cys) + AMP + diphosphate. The chain is Cysteine--tRNA ligase from Geobacter sulfurreducens (strain ATCC 51573 / DSM 12127 / PCA).